The chain runs to 103 residues: Alpha-ketoglutarate dehydrogenase component 4 (103 aa).

Residue methionine 1 is modified to N-acetylmethionine. An N6-succinyllysine modification is found at lysine 5. A disordered region spans residues 20–69 (TPLIRFPDRRDNPKPNVSEALRSAGLPSHSSVISQHSKGSKSPDLLMYQG). The segment covering 47 to 56 (SHSSVISQHS) has biased composition (polar residues). A phosphoserine mark is found at serine 49, serine 61, and serine 90.

This sequence belongs to the alpha-ketoglutarate dehydrogenase component 4 family. In terms of assembly, component of the 2-oxoglutarate dehydrogenase complex (OGDHC), composed of OGDH (2-oxoglutarate dehydrogenase; also called E1 subunit), DLST (dihydrolipoamide succinyltransferase; also called E2 subunit) and DLD (dihydrolipoamide dehydrogenase; also called E3 subunit), and the assembly factor KGD4. Within OGDHC complex, interacts (via N-terminus) with E3 subunit and (via C-terminus) with E2 subunit.

It localises to the mitochondrion. Molecular adapter that is necessary to form a stable 2-oxoglutarate dehydrogenase enzyme complex (OGDHC). Enables the specific recruitment of E3 subunit to E2 subunit in the 2-oxoglutarate dehydrogenase complex (OGDHC). This is Alpha-ketoglutarate dehydrogenase component 4 from Homo sapiens (Human).